We begin with the raw amino-acid sequence, 412 residues long: Multifunctional CCA protein (412 aa).

ATP contacts are provided by Gly8 and Arg11. Residues Gly8 and Arg11 each contribute to the CTP site. Glu21 and Asp23 together coordinate Mg(2+). Positions 91, 137, and 140 each coordinate ATP. Arg91, Arg137, and Arg140 together coordinate CTP. An HD domain is found at Thr228–Trp329.

It belongs to the tRNA nucleotidyltransferase/poly(A) polymerase family. Bacterial CCA-adding enzyme type 1 subfamily. In terms of assembly, monomer. Can also form homodimers and oligomers. Mg(2+) serves as cofactor. It depends on Ni(2+) as a cofactor.

The catalysed reaction is a tRNA precursor + 2 CTP + ATP = a tRNA with a 3' CCA end + 3 diphosphate. It carries out the reaction a tRNA with a 3' CCA end + 2 CTP + ATP = a tRNA with a 3' CCACCA end + 3 diphosphate. Functionally, catalyzes the addition and repair of the essential 3'-terminal CCA sequence in tRNAs without using a nucleic acid template. Adds these three nucleotides in the order of C, C, and A to the tRNA nucleotide-73, using CTP and ATP as substrates and producing inorganic pyrophosphate. tRNA 3'-terminal CCA addition is required both for tRNA processing and repair. Also involved in tRNA surveillance by mediating tandem CCA addition to generate a CCACCA at the 3' terminus of unstable tRNAs. While stable tRNAs receive only 3'-terminal CCA, unstable tRNAs are marked with CCACCA and rapidly degraded. In Yersinia pseudotuberculosis serotype I (strain IP32953), this protein is Multifunctional CCA protein.